Here is a 480-residue protein sequence, read N- to C-terminus: UDP-N-acetylmuramoylalanine--D-glutamate ligase (480 aa).

127–133 contributes to the ATP binding site; sequence GTNGKTT.

It belongs to the MurCDEF family.

The protein localises to the cytoplasm. It carries out the reaction UDP-N-acetyl-alpha-D-muramoyl-L-alanine + D-glutamate + ATP = UDP-N-acetyl-alpha-D-muramoyl-L-alanyl-D-glutamate + ADP + phosphate + H(+). Its pathway is cell wall biogenesis; peptidoglycan biosynthesis. Its function is as follows. Cell wall formation. Catalyzes the addition of glutamate to the nucleotide precursor UDP-N-acetylmuramoyl-L-alanine (UMA). The protein is UDP-N-acetylmuramoylalanine--D-glutamate ligase of Tropheryma whipplei (strain TW08/27) (Whipple's bacillus).